The primary structure comprises 863 residues: Alanine--tRNA ligase (863 aa).

The Zn(2+) site is built by His552, His556, Cys654, and His658.

The protein belongs to the class-II aminoacyl-tRNA synthetase family. Zn(2+) is required as a cofactor.

Its subcellular location is the cytoplasm. It catalyses the reaction tRNA(Ala) + L-alanine + ATP = L-alanyl-tRNA(Ala) + AMP + diphosphate. Functionally, catalyzes the attachment of alanine to tRNA(Ala) in a two-step reaction: alanine is first activated by ATP to form Ala-AMP and then transferred to the acceptor end of tRNA(Ala). Also edits incorrectly charged Ser-tRNA(Ala) and Gly-tRNA(Ala) via its editing domain. This Halorhodospira halophila (strain DSM 244 / SL1) (Ectothiorhodospira halophila (strain DSM 244 / SL1)) protein is Alanine--tRNA ligase.